A 240-amino-acid polypeptide reads, in one-letter code: Extracellular superoxide dismutase [Cu-Zn] (240 aa).

A signal peptide spans 1 to 18 (MLALLCSCLLLAAGASDA). Cystine bridges form between Cys-63-Cys-208 and Cys-125-Cys-207. Asn-107 is a glycosylation site (N-linked (GlcNAc...) asparagine). Cu cation is bound by residues His-114, His-116, and His-131. Positions 131, 139, 142, and 145 each coordinate Zn(2+). Cu cation is bound at residue His-181. N-linked (Glc) (glycation) lysine; in vitro glycans are attached at residues Lys-229 and Lys-230.

It belongs to the Cu-Zn superoxide dismutase family. In terms of assembly, homotetramer. Directly interacts with ATP7A; this interaction is copper-dependent and is required for SOD3 activity. Requires Cu cation as cofactor. Zn(2+) serves as cofactor. As to expression, expressed in blood vessels, heart, lung, kidney and placenta. Major SOD isoenzyme in extracellular fluids such as plasma, lymph and synovial fluid.

The protein localises to the secreted. It localises to the extracellular space. The protein resides in the golgi apparatus. It is found in the trans-Golgi network. The enzyme catalyses 2 superoxide + 2 H(+) = H2O2 + O2. Functionally, protect the extracellular space from toxic effect of reactive oxygen intermediates by converting superoxide radicals into hydrogen peroxide and oxygen. The protein is Extracellular superoxide dismutase [Cu-Zn] (SOD3) of Homo sapiens (Human).